Here is a 382-residue protein sequence, read N- to C-terminus: Dual-specificity RNA methyltransferase RlmN (382 aa).

The active-site Proton acceptor is the E94. Residues 100–336 enclose the Radical SAM core domain; that stretch reads EANRGTLCVS…NTITRKTRGD (237 aa). C107 and C342 form a disulfide bridge. [4Fe-4S] cluster contacts are provided by C114, C118, and C121. S-adenosyl-L-methionine-binding positions include 168-169, S200, 222-224, and N299; these read GE and SLH. The active-site S-methylcysteine intermediate is the C342.

This sequence belongs to the radical SAM superfamily. RlmN family. [4Fe-4S] cluster is required as a cofactor.

It is found in the cytoplasm. The enzyme catalyses adenosine(2503) in 23S rRNA + 2 reduced [2Fe-2S]-[ferredoxin] + 2 S-adenosyl-L-methionine = 2-methyladenosine(2503) in 23S rRNA + 5'-deoxyadenosine + L-methionine + 2 oxidized [2Fe-2S]-[ferredoxin] + S-adenosyl-L-homocysteine. It catalyses the reaction adenosine(37) in tRNA + 2 reduced [2Fe-2S]-[ferredoxin] + 2 S-adenosyl-L-methionine = 2-methyladenosine(37) in tRNA + 5'-deoxyadenosine + L-methionine + 2 oxidized [2Fe-2S]-[ferredoxin] + S-adenosyl-L-homocysteine. Its function is as follows. Specifically methylates position 2 of adenine 2503 in 23S rRNA and position 2 of adenine 37 in tRNAs. m2A2503 modification seems to play a crucial role in the proofreading step occurring at the peptidyl transferase center and thus would serve to optimize ribosomal fidelity. This Legionella pneumophila subsp. pneumophila (strain Philadelphia 1 / ATCC 33152 / DSM 7513) protein is Dual-specificity RNA methyltransferase RlmN.